Reading from the N-terminus, the 909-residue chain is Alanine--tRNA ligase (909 aa).

His600, His604, Cys704, and His708 together coordinate Zn(2+).

This sequence belongs to the class-II aminoacyl-tRNA synthetase family. It depends on Zn(2+) as a cofactor.

It is found in the cytoplasm. It carries out the reaction tRNA(Ala) + L-alanine + ATP = L-alanyl-tRNA(Ala) + AMP + diphosphate. Functionally, catalyzes the attachment of alanine to tRNA(Ala) in a two-step reaction: alanine is first activated by ATP to form Ala-AMP and then transferred to the acceptor end of tRNA(Ala). Also edits incorrectly charged Ser-tRNA(Ala) and Gly-tRNA(Ala) via its editing domain. The sequence is that of Alanine--tRNA ligase from Staphylothermus marinus (strain ATCC 43588 / DSM 3639 / JCM 9404 / F1).